A 523-amino-acid polypeptide reads, in one-letter code: GMP synthase [glutamine-hydrolyzing] (523 aa).

The region spanning 9 to 198 (PVLVVDYGAQ…LTEIAGLEQN (190 aa)) is the Glutamine amidotransferase type-1 domain. Cysteine 86 serves as the catalytic Nucleophile. Residues histidine 172 and glutamate 174 contribute to the active site. The region spanning 199–397 (WTAANIAEEL…LGLPEVIVAR (199 aa)) is the GMPS ATP-PPase domain. 227-233 (SGGVDSA) provides a ligand contact to ATP.

In terms of assembly, homodimer.

It catalyses the reaction XMP + L-glutamine + ATP + H2O = GMP + L-glutamate + AMP + diphosphate + 2 H(+). The protein operates within purine metabolism; GMP biosynthesis; GMP from XMP (L-Gln route): step 1/1. In terms of biological role, catalyzes the synthesis of GMP from XMP. This chain is GMP synthase [glutamine-hydrolyzing], found in Corynebacterium efficiens (strain DSM 44549 / YS-314 / AJ 12310 / JCM 11189 / NBRC 100395).